The chain runs to 151 residues: Probable cyclic pyranopterin monophosphate synthase (151 aa).

Residues 66 to 68 (MCH) and 102 to 103 (ME) each bind substrate. Residue D117 is part of the active site.

This sequence belongs to the MoaC family. In terms of assembly, homohexamer; trimer of dimers.

The catalysed reaction is (8S)-3',8-cyclo-7,8-dihydroguanosine 5'-triphosphate = cyclic pyranopterin phosphate + diphosphate. The protein operates within cofactor biosynthesis; molybdopterin biosynthesis. In terms of biological role, catalyzes the conversion of (8S)-3',8-cyclo-7,8-dihydroguanosine 5'-triphosphate to cyclic pyranopterin monophosphate (cPMP). This Sulfurisphaera tokodaii (strain DSM 16993 / JCM 10545 / NBRC 100140 / 7) (Sulfolobus tokodaii) protein is Probable cyclic pyranopterin monophosphate synthase.